The chain runs to 111 residues: Phosphoribosyl-AMP cyclohydrolase (111 aa).

Residue D80 participates in Mg(2+) binding. C81 is a Zn(2+) binding site. Residues D82 and D84 each contribute to the Mg(2+) site. Zn(2+) is bound by residues C97 and C104.

This sequence belongs to the PRA-CH family. As to quaternary structure, homodimer. Mg(2+) is required as a cofactor. It depends on Zn(2+) as a cofactor.

Its subcellular location is the cytoplasm. It catalyses the reaction 1-(5-phospho-beta-D-ribosyl)-5'-AMP + H2O = 1-(5-phospho-beta-D-ribosyl)-5-[(5-phospho-beta-D-ribosylamino)methylideneamino]imidazole-4-carboxamide. It participates in amino-acid biosynthesis; L-histidine biosynthesis; L-histidine from 5-phospho-alpha-D-ribose 1-diphosphate: step 3/9. In terms of biological role, catalyzes the hydrolysis of the adenine ring of phosphoribosyl-AMP. The sequence is that of Phosphoribosyl-AMP cyclohydrolase from Mycobacterium marinum (strain ATCC BAA-535 / M).